The following is a 223-amino-acid chain: Neurotrophic factor BDNF precursor form (223 aa).

Positions 1–5 (SCMKA) are cleaved as a signal peptide. A propeptide spanning residues 6-114 (APMKEVSIRG…AANMSMRVRR (109 aa)) is cleaved from the precursor. Residue asparagine 107 is glycosylated (N-linked (GlcNAc...) asparagine). 2 disulfides stabilise this stretch: cysteine 127–cysteine 194 and cysteine 172–cysteine 223.

It belongs to the NGF-beta family.

It is found in the secreted. In terms of biological role, promotes the survival of neuronal populations that are all located either in the central nervous system or directly connected to it. This chain is Neurotrophic factor BDNF precursor form (BDNF), found in Charina bottae (Northern rubber boa).